We begin with the raw amino-acid sequence, 592 residues long: MWMFLKLLLFVCSSWWSCAQASNCNATSPYRTLDGTCNNLQNPNWGAANTAYGRLIAADYGDGVKSPRKAASGADLPSARLLSMKLFGDEHVLEPAFTLLSMQFGQLVAHDMGFTSGSTDILPCCSEGKPVSNPVPRCYPIPVASDDPVMGSAGVQCLDFLRTITDCDADPSSCSNSKKAEQLNIATSFIDLSVVYGNSVEENTPIREFTGGLMKVETRDGSDWPPRNPNASTACVQRSPEDACYLTGDARANISPQMAILHILFLREHNRIAKQLAALHPEWNDEKLFQEARRINIAQYQQIVFYEWLPSFLPLPDNGGKRSLSSVLDHQYRADVNPTTLNSNAHAAFRYFHSAILGHLHLDYENRTKAGEISFTDHTLNPAILEAPCKYAQLSRGMATQSMGRIDLNIDHELKHNLFKFNAPFGNDLRAIDIQRARDHGLPSYNSFREKCGLPKAASFDDFTSLLHSPQDAARLASVYASVDDVELTVAGLFEKHIPGTQVGATFRCILLEQFHRTRVGDRFFFETSDPIVGFSREQFKQLRKANIARLLCDNTPKLEGMQSKAFAAIDAGSNKVLPCSSLPAVDLDPWK.

An N-terminal signal peptide occupies residues 1–21 (MWMFLKLLLFVCSSWWSCAQA). The cysteines at positions 24 and 37 are disulfide-linked. The N-linked (GlcNAc...) asparagine glycan is linked to Asn-25. The active-site Proton acceptor is His-110. Positions 111, 187, 189, 191, and 193 each coordinate Ca(2+). Asn-230 is a glycosylation site (N-linked (GlcNAc...) asparagine). A disulfide bridge connects residues Cys-235 and Cys-244. Residue His-353 coordinates heme b. N-linked (GlcNAc...) asparagine glycosylation is present at Asn-366. Disulfide bonds link Cys-452–Cys-509 and Cys-553–Cys-580.

This sequence belongs to the peroxidase family. XPO subfamily. In terms of tissue distribution, female salivary gland.

The protein resides in the secreted. It catalyses the reaction 2 catechol + O2 = 2 1,2-benzoquinone + 2 H2O. Its function is as follows. Inhibits noradrenaline-induced smooth muscle contraction in the host, probably due to the oxidation of noradrenaline, resulting in vasodilation. Exhibits peroxidase activity. The chain is Salivary peroxidase/catechol oxidase from Anopheles albimanus (New world malaria mosquito).